Consider the following 202-residue polypeptide: B-cell CLL/lymphoma 7 protein family member B (202 aa).

The segment at 53–202 (DSKEKEKSKS…PVVPQTTSES (150 aa)) is disordered. The span at 90–99 (ENSNQSSVSD) shows a compositional bias: polar residues. Residues 107 to 123 (SSTNSSPSPQQSESLSP) are compositionally biased toward low complexity. 7 positions are modified to phosphoserine: S114, S118, S120, S122, S127, S148, and S152.

Belongs to the BCL7 family.

In terms of biological role, positive regulator of apoptosis. Plays a role in the Wnt signaling pathway, negatively regulating the expression of Wnt signaling components CTNNB1 and HMGA1. Involved in cell cycle progression, maintenance of the nuclear structure and stem cell differentiation. May play a role in lung tumor development or progression. This Mus musculus (Mouse) protein is B-cell CLL/lymphoma 7 protein family member B (Bcl7b).